Reading from the N-terminus, the 358-residue chain is MRDRLLAAEKVRAIEWRDSTLYLLDQRALPFEESWIAYDSAAGVAEAIRSMVVCGAPAIGISAAYGLVLAACGRSVAGGDWFAALEEDFTLLVDAAPAAVNLSWALNRMRERLERVREHADPLAALEAEALAIHESDREANLTMAQLGVDLIRRHQGNPQALLTHSNTGALATGGFGTALGVIRAAWLEGMVERVYADETRPWLQGSRLTAWELASEGIPVTVNVDAAAAHIMKTKGVTWVVVGADRITANGDVANQIGTYQLAVNAMHHGVRFMVVAPSSSIDMSLASGDDIPLAERAGEELLEIAGKRLGEGVEGFNPLFDVTPADLIDAIVTEKGVVERPDTAKMAQLMCRKRLH.

Residues 54–56 (CGA) and Gln205 each bind substrate. The Proton donor role is filled by Asp246. 256 to 257 (NQ) serves as a coordination point for substrate.

It belongs to the eIF-2B alpha/beta/delta subunits family. MtnA subfamily.

It catalyses the reaction 5-(methylsulfanyl)-alpha-D-ribose 1-phosphate = 5-(methylsulfanyl)-D-ribulose 1-phosphate. It functions in the pathway amino-acid biosynthesis; L-methionine biosynthesis via salvage pathway; L-methionine from S-methyl-5-thio-alpha-D-ribose 1-phosphate: step 1/6. Its function is as follows. Catalyzes the interconversion of methylthioribose-1-phosphate (MTR-1-P) into methylthioribulose-1-phosphate (MTRu-1-P). This Pseudomonas fluorescens (strain ATCC BAA-477 / NRRL B-23932 / Pf-5) protein is Methylthioribose-1-phosphate isomerase.